Here is a 248-residue protein sequence, read N- to C-terminus: Sperm-specific protein Don juan (248 aa).

Residues 82–147 adopt a coiled-coil conformation; that stretch reads KEGNQDELEN…EKKTKCAKKD (66 aa). Residues 146 to 200 are disordered; the sequence is KDPCKKKDPCKKKDPCKKKDPCKKKDPCKKKDPCKKKDPCKKKDPCKKKGGDLKK. 8 consecutive repeat copies span residues 147 to 152, 153 to 158, 159 to 164, 165 to 170, 171 to 176, 177 to 182, 183 to 188, and 189 to 194. The interval 147-194 is 8 X 6 AA tandem repeat of D-P-C-K-K-K; sequence DPCKKKDPCKKKDPCKKKDPCKKKDPCKKKDPCKKKDPCKKKDPCKKK. Positions 197–244 form a coiled coil; the sequence is DLKKKCKKLAEKEKCKKLAKKEKMKKLQKKCKKMAQKEKCKKMAKKDK.

As to expression, expression limited to post-meiotic male germ cells. Expressed in elongated spermatids during individualization and in finally elongated nuclei of spermatids. After completion of nuclear shaping it is no longer expressed in the sperm heads with the onset of individualization.

The protein localises to the nucleus. It is found in the mitochondrion. Its function is as follows. May be involved in the final steps of mitochondrial differentiation within the flagellum. This is Sperm-specific protein Don juan (dj) from Drosophila melanogaster (Fruit fly).